Here is a 663-residue protein sequence, read N- to C-terminus: DNA topoisomerase 4 subunit B (663 aa).

ATP is bound by residues Y7, N47, D74, 114–120, and K341; that span reads GLHGVGA. The tract at residues 386-416 is disordered; the sequence is REAARKAREDARSGKKNKRKDTLLSGKLTPA. Residues 387 to 398 are compositionally biased toward basic and acidic residues; the sequence is EAARKAREDARS. In terms of domain architecture, Toprim spans 424–538; the sequence is NELYLVEGDS…AGRVFIALPP (115 aa). Residues E430, D503, and D505 each coordinate Mg(2+).

The protein belongs to the type II topoisomerase family. ParE type 2 subfamily. Heterotetramer composed of ParC and ParE. The cofactor is Mg(2+). Mn(2+) serves as cofactor. Ca(2+) is required as a cofactor.

The catalysed reaction is ATP-dependent breakage, passage and rejoining of double-stranded DNA.. Its function is as follows. Topoisomerase IV is essential for chromosome segregation. It relaxes supercoiled DNA. Performs the decatenation events required during the replication of a circular DNA molecule. The polypeptide is DNA topoisomerase 4 subunit B (Staphylococcus aureus (strain Mu50 / ATCC 700699)).